Reading from the N-terminus, the 275-residue chain is Formamidopyrimidine-DNA glycosylase (275 aa).

The active-site Schiff-base intermediate with DNA is the proline 2. Residue glutamate 3 is the Proton donor of the active site. The active-site Proton donor; for beta-elimination activity is the lysine 59. The DNA site is built by histidine 92, arginine 111, and arginine 155. The FPG-type zinc finger occupies 240–274; it reads NVYGRAGKACPKCGTTIEKQVLGQRSSYYCPQCQR. Arginine 264 (proton donor; for delta-elimination activity) is an active-site residue.

The protein belongs to the FPG family. As to quaternary structure, monomer. Zn(2+) is required as a cofactor.

The enzyme catalyses Hydrolysis of DNA containing ring-opened 7-methylguanine residues, releasing 2,6-diamino-4-hydroxy-5-(N-methyl)formamidopyrimidine.. It catalyses the reaction 2'-deoxyribonucleotide-(2'-deoxyribose 5'-phosphate)-2'-deoxyribonucleotide-DNA = a 3'-end 2'-deoxyribonucleotide-(2,3-dehydro-2,3-deoxyribose 5'-phosphate)-DNA + a 5'-end 5'-phospho-2'-deoxyribonucleoside-DNA + H(+). Its function is as follows. Involved in base excision repair of DNA damaged by oxidation or by mutagenic agents. Acts as a DNA glycosylase that recognizes and removes damaged bases. Has a preference for oxidized purines, such as 7,8-dihydro-8-oxoguanine (8-oxoG). Has AP (apurinic/apyrimidinic) lyase activity and introduces nicks in the DNA strand. Cleaves the DNA backbone by beta-delta elimination to generate a single-strand break at the site of the removed base with both 3'- and 5'-phosphates. This chain is Formamidopyrimidine-DNA glycosylase, found in Magnetococcus marinus (strain ATCC BAA-1437 / JCM 17883 / MC-1).